The chain runs to 197 residues: Beta-crystallin A2 (197 aa).

The tract at residues 1–11 is N-terminal arm; the sequence is MSSAPAPGSAP. 2 consecutive Beta/gamma crystallin 'Greek key' domains span residues 12–52 and 53–99; these read VCLT…KVEN and GAWV…RPVL. The connecting peptide stretch occupies residues 100-105; the sequence is CANHSD. 2 Beta/gamma crystallin 'Greek key' domains span residues 106-147 and 148-196; these read SRVT…KVSS and GAWV…RRVQ.

This sequence belongs to the beta/gamma-crystallin family. As to quaternary structure, homo/heterodimer, or complexes of higher-order. The structure of beta-crystallin oligomers seems to be stabilized through interactions between the N-terminal arms.

In terms of biological role, crystallins are the dominant structural components of the vertebrate eye lens. This chain is Beta-crystallin A2 (Cryba2), found in Mus musculus (Mouse).